An 89-amino-acid chain; its full sequence is Cell division topological specificity factor (89 aa).

This sequence belongs to the MinE family.

Functionally, prevents the cell division inhibition by proteins MinC and MinD at internal division sites while permitting inhibition at polar sites. This ensures cell division at the proper site by restricting the formation of a division septum at the midpoint of the long axis of the cell. This Paracoccus denitrificans (strain Pd 1222) protein is Cell division topological specificity factor.